We begin with the raw amino-acid sequence, 306 residues long: Tryptophan 2,3-dioxygenase (306 aa).

Substrate-binding positions include phenylalanine 75–histidine 79, tyrosine 137, and arginine 141. Histidine 264 provides a ligand contact to heme. Threonine 278 is a binding site for substrate.

The protein belongs to the tryptophan 2,3-dioxygenase family. As to quaternary structure, homotetramer. Heme is required as a cofactor.

It catalyses the reaction L-tryptophan + O2 = N-formyl-L-kynurenine. It functions in the pathway amino-acid degradation; L-tryptophan degradation via kynurenine pathway; L-kynurenine from L-tryptophan: step 1/2. Its function is as follows. Heme-dependent dioxygenase that catalyzes the oxidative cleavage of the L-tryptophan (L-Trp) pyrrole ring and converts L-tryptophan to N-formyl-L-kynurenine. Catalyzes the oxidative cleavage of the indole moiety. In Paraburkholderia phytofirmans (strain DSM 17436 / LMG 22146 / PsJN) (Burkholderia phytofirmans), this protein is Tryptophan 2,3-dioxygenase.